Consider the following 337-residue polypeptide: tRNA N6-adenosine threonylcarbamoyltransferase (337 aa).

Residues H111 and H115 each contribute to the Fe cation site. Residues 134-138 (LVSGG), D167, G180, and N272 contribute to the substrate site. D300 contacts Fe cation.

This sequence belongs to the KAE1 / TsaD family. Fe(2+) is required as a cofactor.

The protein localises to the cytoplasm. The catalysed reaction is L-threonylcarbamoyladenylate + adenosine(37) in tRNA = N(6)-L-threonylcarbamoyladenosine(37) in tRNA + AMP + H(+). Functionally, required for the formation of a threonylcarbamoyl group on adenosine at position 37 (t(6)A37) in tRNAs that read codons beginning with adenine. Is involved in the transfer of the threonylcarbamoyl moiety of threonylcarbamoyl-AMP (TC-AMP) to the N6 group of A37, together with TsaE and TsaB. TsaD likely plays a direct catalytic role in this reaction. In Methylococcus capsulatus (strain ATCC 33009 / NCIMB 11132 / Bath), this protein is tRNA N6-adenosine threonylcarbamoyltransferase.